The primary structure comprises 158 residues: MDSGIYETPINYKKSNVSAVSVNNTIFVTGGLFINNSNSTIVVNNMEKLDIYKDKQWSIIEMPMARVYHGIDSTFGMLYFAGGLSVTEQYGNLEKNNEISCYNPRTNKWFDISYTIYKISISSLCKLNNVFYVFSKDIGYVEKYDGLPAIKALSTSPY.

Kelch repeat units follow at residues 25-76 (TIFV…STFG) and 77-129 (MLYF…KLNN).

Belongs to the poxviruses Kelch family.

The sequence is that of Kelch repeat protein B10 from Vaccinia virus (strain Ankara) (VACV).